The sequence spans 1228 residues: DNA-directed RNA polymerase subunit beta'' (1228 aa).

Residues Cys-222, Cys-296, Cys-303, and Cys-306 each contribute to the Zn(2+) site.

Belongs to the RNA polymerase beta' chain family. RpoC2 subfamily. In plastids the minimal PEP RNA polymerase catalytic core is composed of four subunits: alpha, beta, beta', and beta''. When a (nuclear-encoded) sigma factor is associated with the core the holoenzyme is formed, which can initiate transcription. Zn(2+) serves as cofactor.

The protein localises to the plastid. It is found in the chloroplast. The catalysed reaction is RNA(n) + a ribonucleoside 5'-triphosphate = RNA(n+1) + diphosphate. DNA-dependent RNA polymerase catalyzes the transcription of DNA into RNA using the four ribonucleoside triphosphates as substrates. The polypeptide is DNA-directed RNA polymerase subunit beta'' (Gracilaria tenuistipitata var. liui (Red alga)).